The chain runs to 671 residues: Archaeal Rqc2 homolog aRqcH (671 aa).

Coiled coils occupy residues 291-363 (KVVV…ARIK) and 410-465 (RKNA…MQMK).

The protein belongs to the NEMF family. In terms of assembly, associates with stalled 50S ribosomal subunits.

Functionally, probably part of the ribosome quality control system (RQC). May mediate the addition of alanine residues (Ala tailing) to incompletely synthesized nascent chains from stalled ribosomes, leading to their degradation. The sequence is that of Archaeal Rqc2 homolog aRqcH from Methanocaldococcus jannaschii (strain ATCC 43067 / DSM 2661 / JAL-1 / JCM 10045 / NBRC 100440) (Methanococcus jannaschii).